The following is a 501-amino-acid chain: Probable malate:quinone oxidoreductase (501 aa).

The protein belongs to the MQO family. The cofactor is FAD.

The catalysed reaction is (S)-malate + a quinone = a quinol + oxaloacetate. Its pathway is carbohydrate metabolism; tricarboxylic acid cycle; oxaloacetate from (S)-malate (quinone route): step 1/1. The chain is Probable malate:quinone oxidoreductase from Geobacillus kaustophilus (strain HTA426).